A 45-amino-acid chain; its full sequence is Large ribosomal subunit protein bL34 (45 aa).

This sequence belongs to the bacterial ribosomal protein bL34 family.

In Prochlorococcus marinus (strain MIT 9313), this protein is Large ribosomal subunit protein bL34.